The primary structure comprises 139 residues: D-ribose pyranase (139 aa).

Residue His20 is the Proton donor of the active site. Substrate contacts are provided by residues Asp28, His106, and 128–130 (YAN).

It belongs to the RbsD / FucU family. RbsD subfamily. As to quaternary structure, homodecamer.

It is found in the cytoplasm. It carries out the reaction beta-D-ribopyranose = beta-D-ribofuranose. The protein operates within carbohydrate metabolism; D-ribose degradation; D-ribose 5-phosphate from beta-D-ribopyranose: step 1/2. Its function is as follows. Catalyzes the interconversion of beta-pyran and beta-furan forms of D-ribose. The chain is D-ribose pyranase from Escherichia coli O81 (strain ED1a).